Reading from the N-terminus, the 107-residue chain is MSISLSESAAQRVSAFIANRGKGLGLRLGVRTSGCSGMAYVLEFVDDLNDGDTVFEDKGVKVIVDGKSLVYLDGTELDFVKEGLNEGFKFNNPNISGECGCGESFNV.

Residues Cys-35, Cys-99, and Cys-101 each coordinate Fe cation.

The protein belongs to the HesB/IscA family. As to quaternary structure, homodimer; may form tetramers and higher multimers. Requires Fe cation as cofactor.

In terms of biological role, is able to transfer iron-sulfur clusters to apo-ferredoxin. Multiple cycles of [2Fe2S] cluster formation and transfer are observed, suggesting that IscA acts catalytically. Recruits intracellular free iron so as to provide iron for the assembly of transient iron-sulfur cluster in IscU in the presence of IscS, L-cysteine and the thioredoxin reductase system TrxA/TrxB. The polypeptide is Iron-binding protein IscA (Pectobacterium atrosepticum (strain SCRI 1043 / ATCC BAA-672) (Erwinia carotovora subsp. atroseptica)).